A 178-amino-acid chain; its full sequence is ATP synthase subunit delta (178 aa).

The protein belongs to the ATPase delta chain family. F-type ATPases have 2 components, F(1) - the catalytic core - and F(0) - the membrane proton channel. F(1) has five subunits: alpha(3), beta(3), gamma(1), delta(1), epsilon(1). F(0) has three main subunits: a(1), b(2) and c(10-14). The alpha and beta chains form an alternating ring which encloses part of the gamma chain. F(1) is attached to F(0) by a central stalk formed by the gamma and epsilon chains, while a peripheral stalk is formed by the delta and b chains.

The protein localises to the cell inner membrane. F(1)F(0) ATP synthase produces ATP from ADP in the presence of a proton or sodium gradient. F-type ATPases consist of two structural domains, F(1) containing the extramembraneous catalytic core and F(0) containing the membrane proton channel, linked together by a central stalk and a peripheral stalk. During catalysis, ATP synthesis in the catalytic domain of F(1) is coupled via a rotary mechanism of the central stalk subunits to proton translocation. In terms of biological role, this protein is part of the stalk that links CF(0) to CF(1). It either transmits conformational changes from CF(0) to CF(1) or is implicated in proton conduction. The protein is ATP synthase subunit delta of Thioalkalivibrio sulfidiphilus (strain HL-EbGR7).